A 496-amino-acid polypeptide reads, in one-letter code: Glutamyl-tRNA(Gln) amidotransferase subunit A (496 aa).

Residues Lys75 and Ser150 each act as charge relay system in the active site. Ser174 functions as the Acyl-ester intermediate in the catalytic mechanism.

The protein belongs to the amidase family. GatA subfamily. In terms of assembly, heterotrimer of A, B and C subunits.

It catalyses the reaction L-glutamyl-tRNA(Gln) + L-glutamine + ATP + H2O = L-glutaminyl-tRNA(Gln) + L-glutamate + ADP + phosphate + H(+). In terms of biological role, allows the formation of correctly charged Gln-tRNA(Gln) through the transamidation of misacylated Glu-tRNA(Gln) in organisms which lack glutaminyl-tRNA synthetase. The reaction takes place in the presence of glutamine and ATP through an activated gamma-phospho-Glu-tRNA(Gln). The protein is Glutamyl-tRNA(Gln) amidotransferase subunit A of Burkholderia cenocepacia (strain HI2424).